The following is a 243-amino-acid chain: Protein IN2-1 (243 aa).

The segment at 1-26 (MAAAAGPSSSVKESLPPALGSTSQPP) is disordered. The GST N-terminal domain maps to 31-112 (GTTRLYICYF…YIDSNFDGPA (82 aa)). Glutathione contacts are provided by residues lysine 70, valine 84, and 96–97 (ES). Residues 109-240 (DGPALLPEDA…FLLDLAKSHL (132 aa)) form the GST C-terminal domain.

It belongs to the GST superfamily. HSP26 family. As to expression, leaves and roots. It is more strongly induced in the leaves relative to the roots.

The protein is Protein IN2-1 (IN2-1) of Zea mays (Maize).